Reading from the N-terminus, the 221-residue chain is Serotriflin (221 aa).

The SCP domain occupies 19-147 (LDKHNALRRS…SYNYYYVCHY (129 aa)). The N-linked (GlcNAc...) asparagine glycan is linked to asparagine 48. 8 cysteine pairs are disulfide-bonded: cysteine 56-cysteine 134, cysteine 73-cysteine 148, cysteine 129-cysteine 145, cysteine 167-cysteine 174, cysteine 170-cysteine 179, cysteine 183-cysteine 216, cysteine 192-cysteine 210, and cysteine 201-cysteine 214. Positions 183–216 (CKHVDRYSNCNSLVQQISCQSNNMNTDCPASCFC) constitute a ShKT domain.

In terms of assembly, forms a stable, non-covalent complex with SSP-2.

The protein resides in the secreted. In Protobothrops flavoviridis (Habu), this protein is Serotriflin.